The sequence spans 328 residues: WUSCHEL-related homeobox 6 (328 aa).

Polar residues predominate over residues 1–11 (MEGSSNSPDRQ). The tract at residues 1–45 (MEGSSNSPDRQSSGGSPPEERGGGGSGGGGGRSAAGEPVRSRWTP) is disordered. Positions 23–33 (GGGSGGGGGRS) are enriched in gly residues. The homeobox; WUS-type DNA-binding region spans 38–102 (PVRSRWTPKP…NRRSRSRRRQ (65 aa)).

The protein belongs to the WUS homeobox family.

It is found in the nucleus. Transcription factor which may be involved in developmental processes. In Oryza sativa subsp. japonica (Rice), this protein is WUSCHEL-related homeobox 6 (WOX6).